The chain runs to 155 residues: Small ribosomal subunit protein uS7cz/uS7cy (155 aa).

This sequence belongs to the universal ribosomal protein uS7 family. As to quaternary structure, part of the 30S ribosomal subunit.

It localises to the plastid. It is found in the chloroplast. Its function is as follows. One of the primary rRNA binding proteins, it binds directly to 16S rRNA where it nucleates assembly of the head domain of the 30S subunit. The protein is Small ribosomal subunit protein uS7cz/uS7cy (rps7-A) of Oenothera argillicola (Appalachian evening primrose).